The sequence spans 81 residues: Defensin-like protein 115 (81 aa).

The signal sequence occupies residues 1-24 (MAITKKMLVVFLLAFLFVTSSVHC). 4 disulfide bridges follow: C40/C78, C46/C69, C54/C76, and C58/C77.

It belongs to the DEFL family.

It is found in the secreted. This Arabidopsis thaliana (Mouse-ear cress) protein is Defensin-like protein 115.